Here is a 666-residue protein sequence, read N- to C-terminus: Endogenous retrovirus group K member 19 Gag polyprotein (666 aa).

Gly2 is lipidated: N-myristoyl glycine. Disordered stretches follow at residues 170–189 (LVGP…AGQV) and 223–264 (PLES…GSEL). A compositionally biased stretch (pro residues) spans 232–247 (GMPPAPQGRAPYPQPP). 2 consecutive CCHC-type zinc fingers follow at residues 544 to 561 (GKCY…NCPV) and 580 to 597 (DLCP…QCRS). Positions 598 to 640 (KFDKNGQPLSGNEQRGQPQAPQQTGAFPIQPFVPHGFQGQQPP) are disordered. Over residues 604–622 (QPLSGNEQRGQPQAPQQTG) the composition is skewed to polar residues.

This sequence belongs to the beta type-B retroviral Gag protein family. HERV class-II K(HML-2) gag subfamily. Post-translationally, myristoylation is essential for retroviral assembly. Alteration of the glycine residue leads to a block in the budding of particles and an accumulation of Gag inside the cell. In terms of processing, specific enzymatic cleavages may yield mature proteins.

The protein localises to the cell membrane. Functionally, the products of the Gag polyproteins of infectious retroviruses perform highly complex orchestrated tasks during the assembly, budding, maturation, and infection stages of the viral replication cycle. During viral assembly, the proteins form membrane associations and self-associations that ultimately result in budding of an immature virion from the infected cell. Gag precursors also function during viral assembly to selectively bind and package two plus strands of genomic RNA. Endogenous Gag proteins may have kept, lost or modified their original function during evolution. The sequence is that of Endogenous retrovirus group K member 19 Gag polyprotein (ERVK-19) from Homo sapiens (Human).